The primary structure comprises 501 residues: Nuclear receptor-binding protein 2 (501 aa).

The interval 1–33 is disordered; it reads MAAPEPAPRRAREREREREDESEDESDILEESP. The span at 7–19 shows a compositional bias: basic and acidic residues; that stretch reads APRRARERERERE. Residues 20 to 30 are compositionally biased toward acidic residues; it reads DESEDESDILE. Positions 38-306 constitute a Protein kinase domain; sequence QKRREQVNQG…AHSLLFHRVL (269 aa). T409 and T411 each carry phosphothreonine.

This sequence belongs to the protein kinase superfamily. Ser/Thr protein kinase family.

The protein localises to the cytoplasm. Functionally, may regulate apoptosis of neural progenitor cells during their differentiation. The polypeptide is Nuclear receptor-binding protein 2 (Homo sapiens (Human)).